We begin with the raw amino-acid sequence, 396 residues long: MAETQVRNFNINFGPQHPAAHGVLRLVLELDGEVVERVDPHIGLLHRGTEKLMEAKTYLQALPYLDRLDYVAPMNQEHAYALAVERLLGIDVPKRGQLIRVLYSEIGRILNHLLNVTTQAMDVGALTPPLWGFEEREKLMVFYERACGARMHAAYFRPGGVHQDLPDQLVEDIGKWIDPFFNTLNNLDDLITPNRIFKQRNVDIGVVKLEDAWAWGFSGVMVRGSGAAWDLRKSQPYECYNEMEFDIPIGKNGDCYDRYLIRMEEMRQSARIMRQCVDLLLGKERVGPVSNADNKIVPPKRGEMKRSMEALIHHFKLYTEGYHVPAGEVYAAVEAPKGEFGVFLVSDGSNKPYRCKLRAPGFAHLQAMDFLCRGHMLADVSAILGSLDIVFGEVDR.

This sequence belongs to the complex I 49 kDa subunit family. NDH-1 is composed of 14 different subunits. Subunits NuoB, C, D, E, F, and G constitute the peripheral sector of the complex.

It is found in the cell inner membrane. It carries out the reaction a quinone + NADH + 5 H(+)(in) = a quinol + NAD(+) + 4 H(+)(out). Functionally, NDH-1 shuttles electrons from NADH, via FMN and iron-sulfur (Fe-S) centers, to quinones in the respiratory chain. The immediate electron acceptor for the enzyme in this species is believed to be ubiquinone. Couples the redox reaction to proton translocation (for every two electrons transferred, four hydrogen ions are translocated across the cytoplasmic membrane), and thus conserves the redox energy in a proton gradient. In Brucella anthropi (strain ATCC 49188 / DSM 6882 / CCUG 24695 / JCM 21032 / LMG 3331 / NBRC 15819 / NCTC 12168 / Alc 37) (Ochrobactrum anthropi), this protein is NADH-quinone oxidoreductase subunit D.